We begin with the raw amino-acid sequence, 62 residues long: Phyllokinin-1 (62 aa).

An N-terminal signal peptide occupies residues 1 to 19 (MSFLKKSLFLVLFLGLVSS). A propeptide spanning residues 20–48 (SICEEEKRETEEEENEDEIEEESEEKKRE) is cleaved from the precursor. The segment at 22–62 (CEEEKRETEEEENEDEIEEESEEKKREDPERPPGFTPFRVY) is disordered. The span at 30–42 (EEEENEDEIEEES) shows a compositional bias: acidic residues. Residues 43–52 (EEKKREDPER) are compositionally biased toward basic and acidic residues. At Y62 the chain carries Sulfotyrosine; partial.

It belongs to the frog skin active peptide (FSAP) family. Bradykinin-related peptide subfamily. In terms of processing, asp,Pro,Glu-[Thr6,Val10]-phyllokinin and [Thr6,Val10]-phyllokinin occur in sulfated and nonsulfated forms. [Thr6]-bradykinin and Des-Arg-[Thr6]-bradykinin are nonsulfated. In terms of tissue distribution, expressed by the skin glands.

It localises to the secreted. Inhibits ACE with a Ki of 1.6 uM, and targets B2 bradykinin receptor (BDKRB2). Provokes contraction of smooth muscle preparation (ileum). In vivo, induces an early hyperalgesic effects in living rats after intraplantar injection. The chain is Phyllokinin-1 from Pithecopus azureus (Orange-legged monkey tree frog).